The following is a 256-amino-acid chain: Transmembrane protein 74B (256 aa).

The interval 1-111 (MPPAQGYEFA…LSLHSEEGPA (111 aa)) is disordered. Residues 80–96 (RLGSSPSPPGGVSSLPR) show a composition bias toward low complexity. Residues 97-108 (SQRDDLSLHSEE) are compositionally biased toward basic and acidic residues. 2 helical membrane-spanning segments follow: residues 123 to 143 (FVSA…AYAI) and 177 to 197 (IIAG…LLMV).

This sequence belongs to the TMEM74 family.

Its subcellular location is the membrane. The chain is Transmembrane protein 74B (TMEM74B) from Homo sapiens (Human).